Consider the following 334-residue polypeptide: Phosphatidylglycerol--prolipoprotein diacylglyceryl transferase (334 aa).

The next 4 membrane-spanning stretches (helical) occupy residues 22–42, 54–74, 105–125, and 131–151; these read FLPF…VVAA, AEPG…IIGA, IWEG…GVGI, and GLRF…AQAI. Position 153 (Arg153) interacts with a 1,2-diacyl-sn-glycero-3-phospho-(1'-sn-glycerol). A run of 2 helical transmembrane segments spans residues 191–211 and 251–271; these read LFQP…FVIL and FLGI…GAII. The disordered stretch occupies residues 296 to 334; that stretch reads PQAEVESGETDPEEILHADDDEERTGTHKPQATSLSGSN. Positions 301–318 are enriched in acidic residues; sequence ESGETDPEEILHADDDEE. A compositionally biased stretch (polar residues) spans 323-334; it reads HKPQATSLSGSN.

It belongs to the Lgt family.

It localises to the cell membrane. It carries out the reaction L-cysteinyl-[prolipoprotein] + a 1,2-diacyl-sn-glycero-3-phospho-(1'-sn-glycerol) = an S-1,2-diacyl-sn-glyceryl-L-cysteinyl-[prolipoprotein] + sn-glycerol 1-phosphate + H(+). It functions in the pathway protein modification; lipoprotein biosynthesis (diacylglyceryl transfer). Its function is as follows. Catalyzes the transfer of the diacylglyceryl group from phosphatidylglycerol to the sulfhydryl group of the N-terminal cysteine of a prolipoprotein, the first step in the formation of mature lipoproteins. This Leifsonia xyli subsp. xyli (strain CTCB07) protein is Phosphatidylglycerol--prolipoprotein diacylglyceryl transferase.